A 209-amino-acid chain; its full sequence is N-acetyltransferase aca1 (209 aa).

Residues 26–202 (TNVKNKEELL…DAYIYQYHFP (177 aa)) form the N-acetyltransferase domain. Asparagine 118 lines the substrate pocket. Residue 128 to 133 (RSKGIG) coordinates CoA. 155 to 156 (NL) serves as a coordination point for substrate.

Belongs to the acetyltransferase family. As to quaternary structure, homodimer.

The protein resides in the cytoplasm. It is found in the mitochondrion. It catalyses the reaction L-glutamate 5-semialdehyde + acetyl-CoA = N-acetyl-L-glutamate 5-semialdehyde + CoA + H(+). Its function is as follows. N-acetyltransferase involved in oxidative stress resistance. Acetylates the toxic proline metabolism intermediate (S)-1-pyrroline-5-carboxylate (P5C), or more likely its spontaneously forming tautomer glutamate-5-semialdehyde (GSA) into N-acetyl-GSA for arginine synthesis in the mitochondria. P5C has been shown to increase the levels of reactive oxygen species (ROS) in the cell by inhibiting the function of the respiratory chain in the mitochondria. The enzyme is able to reduce intracellular ROS levels under P5C-induced oxidative stress and protects cells from damage by oxidative stress. Also acetylates and thereby detoxifies the proline analog azetidine-2-carboxylate (AZC), however it is unlikely that AZC is a natural substrate as it occurs only in plants belonging to the Lilaceae family. This chain is N-acetyltransferase aca1, found in Schizosaccharomyces pombe (strain 972 / ATCC 24843) (Fission yeast).